Consider the following 747-residue polypeptide: Kinesin-like protein KIF3B (747 aa).

Methionine 1 carries the N-acetylmethionine modification. At serine 2 the chain carries N-acetylserine; in Kinesin-like protein KIF3B, N-terminally processed. Positions 9–340 (SVRVVVRCRP…LRYANRAKNI (332 aa)) constitute a Kinesin motor domain. 96–103 (GQTGTGKT) is an ATP binding site. The stretch at 346 to 579 (VNEDPKDALL…EQTQNELTRE (234 aa)) forms a coiled coil. Disordered regions lie at residues 374–412 (IGRR…DKDD) and 699–747 (QVDA…LVPK). Acidic residues predominate over residues 393 to 411 (GEEEEEEGEEGEEEGDDKD). Residues 580–747 (LKLKHLIIEN…YPQSRGLVPK (168 aa)) are globular. The span at 701 to 710 (DASSFESTAN) shows a compositional bias: polar residues. Residues 711–721 (KKSKARPKSGR) show a composition bias toward basic residues. Low complexity predominate over residues 722-735 (KSGSSSSSSGTPAS).

The protein belongs to the TRAFAC class myosin-kinesin ATPase superfamily. Kinesin family. Kinesin II subfamily. In terms of assembly, heterodimer of KIF3A and KIF3B. KIF3A/KIF3B heterodimer interacts with KIFAP3 forming a heterotrimeric (KIF3A/KIF3B/KIFAP3) complex. Interacts directly with IFT20. Interacts with the SMC3 subunit of the cohesin complex. Interacts with FLCN.

The protein localises to the cytoplasm. It localises to the cytoskeleton. The protein resides in the cell projection. Its subcellular location is the cilium. It is found in the dendritic spine. Microtubule-based molecular motor that transport intracellular cargos, such as vesicles, organelles and protein complexes. Uses ATP hydrolysis to generate force to bind and move along the microtubule. Plays a role in cilia formation. Involved in photoreceptor integrity and opsin trafficking in rod photoreceptors. Transports vesicles containing N-methyl-D-aspartate (NMDA) receptor subunit GRIN2A into neuronal dendrites. This chain is Kinesin-like protein KIF3B (KIF3B), found in Homo sapiens (Human).